The chain runs to 140 residues: Cell division protein SepF (140 aa).

Residues 15 to 47 (DSQYEEPTEASQAAAPTESATNTRSTPKVVPMQ) are disordered.

Belongs to the SepF family. Homodimer. Interacts with FtsZ.

Its subcellular location is the cytoplasm. Functionally, cell division protein that is part of the divisome complex and is recruited early to the Z-ring. Probably stimulates Z-ring formation, perhaps through the cross-linking of FtsZ protofilaments. Its function overlaps with FtsA. The polypeptide is Cell division protein SepF (Lactiplantibacillus plantarum (strain ATCC BAA-793 / NCIMB 8826 / WCFS1) (Lactobacillus plantarum)).